Reading from the N-terminus, the 84-residue chain is MPLAKDLLHPSPEEEKRKHKKKRLVQSPNSYFMDVKCPGCYKITTVFSHAQTVVLCVGCSTVLCQPTGGKARLTEGCSFRRKQH.

Positions 1–16 are enriched in basic and acidic residues; sequence MPLAKDLLHPSPEEEK. The segment at 1 to 23 is disordered; the sequence is MPLAKDLLHPSPEEEKRKHKKKR. Residue Ser-11 is modified to Phosphoserine. The C4-type zinc finger occupies 38–60; that stretch reads PGCYKITTVFSHAQTVVLCVGCS.

The protein belongs to the eukaryotic ribosomal protein eS27 family. In terms of assembly, component of the small ribosomal subunit. Part of the small subunit (SSU) processome, composed of more than 70 proteins and the RNA chaperone small nucleolar RNA (snoRNA) U3. It depends on Zn(2+) as a cofactor.

It localises to the cytoplasm. The protein localises to the nucleus. Its subcellular location is the nucleolus. In terms of biological role, component of the small ribosomal subunit. The ribosome is a large ribonucleoprotein complex responsible for the synthesis of proteins in the cell. Required for proper rRNA processing and maturation of 18S rRNAs. Part of the small subunit (SSU) processome, first precursor of the small eukaryotic ribosomal subunit. During the assembly of the SSU processome in the nucleolus, many ribosome biogenesis factors, an RNA chaperone and ribosomal proteins associate with the nascent pre-rRNA and work in concert to generate RNA folding, modifications, rearrangements and cleavage as well as targeted degradation of pre-ribosomal RNA by the RNA exosome. In Mus musculus (Mouse), this protein is Small ribosomal subunit protein eS27.